A 427-amino-acid chain; its full sequence is UPF0229 protein YeaH (427 aa).

A disordered region spans residues 84-110; the sequence is QSDRIERPQGGGGGSGSGQGQASQDGE. Gly residues predominate over residues 92 to 102; the sequence is QGGGGGSGSGQ.

This sequence belongs to the UPF0229 family.

This Escherichia fergusonii (strain ATCC 35469 / DSM 13698 / CCUG 18766 / IAM 14443 / JCM 21226 / LMG 7866 / NBRC 102419 / NCTC 12128 / CDC 0568-73) protein is UPF0229 protein YeaH.